A 131-amino-acid polypeptide reads, in one-letter code: MSWQAYVDEHLMCEIEGHHLASAAILGHDGTVWAQSADFPQFKPEEITGIMKDFDEPGHLAPTGMFVATAKYMVIQGEPGAVIRGKKGAGGITIKKTGQALVVGIYDEPMTPGQCSMVVERLGDYLVKQGL.

A disulfide bond links Cys13 and Cys115. The short motif at 81-97 is the Involved in PIP2 interaction element; that stretch reads AVIRGKKGAGGITIKKT. Position 111 is a phosphothreonine (Thr111).

The protein belongs to the profilin family. As to quaternary structure, occurs in many kinds of cells as a complex with monomeric actin in a 1:1 ratio. Post-translationally, phosphorylated by MAP kinases.

The protein localises to the cytoplasm. The protein resides in the cytoskeleton. Binds to actin and affects the structure of the cytoskeleton. At high concentrations, profilin prevents the polymerization of actin, whereas it enhances it at low concentrations. This is Profilin-10 from Phleum pratense (Common timothy).